Consider the following 176-residue polypeptide: Large ribosomal subunit protein uL10 (176 aa).

This sequence belongs to the universal ribosomal protein uL10 family. Part of the ribosomal stalk of the 50S ribosomal subunit. The N-terminus interacts with L11 and the large rRNA to form the base of the stalk. The C-terminus forms an elongated spine to which L12 dimers bind in a sequential fashion forming a multimeric L10(L12)X complex.

In terms of biological role, forms part of the ribosomal stalk, playing a central role in the interaction of the ribosome with GTP-bound translation factors. The protein is Large ribosomal subunit protein uL10 of Nocardia farcinica (strain IFM 10152).